Here is a 432-residue protein sequence, read N- to C-terminus: Glutamate-gated chloride channel subunit beta (432 aa).

An N-terminal signal peptide occupies residues 1–18 (MSQYMMVAVAAVVAVAGS). Topologically, residues 19–249 (SQISRRSTGG…MQLTLKRQFS (231 aa)) are extracellular. N-linked (GlcNAc...) asparagine glycosylation occurs at Asn52. Residues Arg69, Arg88, and Ser155 each contribute to the L-glutamate site. Cys164 and Cys178 form a disulfide bridge. Ser184 serves as a coordination point for L-glutamate. N-linked (GlcNAc...) asparagine glycosylation is present at Asn219. An intrachain disulfide couples Cys226 to Cys237. Residues 250–272 (YYLVQLYGPTTMIVIVSWVSFWI) form a helical membrane-spanning segment. The Cytoplasmic portion of the chain corresponds to 273–277 (DMHST). Residues 278–299 (AGRVALGVTTLLTMTTMQAAIN) traverse the membrane as a helical segment. At 300 to 306 (AKLPPVS) the chain is on the extracellular side. The helical transmembrane segment at 307 to 327 (YVKVVDVWLGACQTFVFGALL) threads the bilayer. Residues 328 to 402 (EYAFVSYQDS…KPDYLPAKID (75 aa)) are Cytoplasmic-facing. Residues 403–426 (YYARFCVPLGFLAFNAIYWTSCLV) form a helical membrane-spanning segment. Over 427-432 (MVSRLV) the chain is Extracellular.

The protein belongs to the ligand-gated ion channel (TC 1.A.9) family. Glutamate-gated chloride channel (TC 1.A.9.4) subfamily. Pentamer. Expressed in motor neuron commissures at the anterior portion of the worms.

The protein resides in the postsynaptic cell membrane. It localises to the cell membrane. Its function is as follows. Glutamate-gated chloride channel subunit; channel properties may be modulated by the formation of heteromeric channels. Glutamate binding triggers a rapidly reversible current, while the anti-helmintic drug ivermectin triggers a permanently open channel configuration. This Haemonchus contortus (Barber pole worm) protein is Glutamate-gated chloride channel subunit beta.